A 264-amino-acid chain; its full sequence is S-adenosylmethionine decarboxylase proenzyme (264 aa).

The active-site Schiff-base intermediate with substrate; via pyruvic acid is Ser113. Ser113 is modified (pyruvic acid (Ser); by autocatalysis). The active-site Proton acceptor; for processing activity is the His118. Cys141 functions as the Proton donor; for catalytic activity in the catalytic mechanism.

This sequence belongs to the prokaryotic AdoMetDC family. Type 2 subfamily. Heterooctamer of four alpha and four beta chains arranged as a tetramer of alpha/beta heterodimers. Pyruvate serves as cofactor. Post-translationally, is synthesized initially as an inactive proenzyme. Formation of the active enzyme involves a self-maturation process in which the active site pyruvoyl group is generated from an internal serine residue via an autocatalytic post-translational modification. Two non-identical subunits are generated from the proenzyme in this reaction, and the pyruvate is formed at the N-terminus of the alpha chain, which is derived from the carboxyl end of the proenzyme. The post-translation cleavage follows an unusual pathway, termed non-hydrolytic serinolysis, in which the side chain hydroxyl group of the serine supplies its oxygen atom to form the C-terminus of the beta chain, while the remainder of the serine residue undergoes an oxidative deamination to produce ammonia and the pyruvoyl group blocking the N-terminus of the alpha chain.

The enzyme catalyses S-adenosyl-L-methionine + H(+) = S-adenosyl 3-(methylsulfanyl)propylamine + CO2. The protein operates within amine and polyamine biosynthesis; S-adenosylmethioninamine biosynthesis; S-adenosylmethioninamine from S-adenosyl-L-methionine: step 1/1. Functionally, catalyzes the decarboxylation of S-adenosylmethionine to S-adenosylmethioninamine (dcAdoMet), the propylamine donor required for the synthesis of the polyamines spermine and spermidine from the diamine putrescine. In Xylella fastidiosa (strain 9a5c), this protein is S-adenosylmethionine decarboxylase proenzyme.